A 181-amino-acid chain; its full sequence is ATP synthase subunit delta (181 aa).

Belongs to the ATPase delta chain family. As to quaternary structure, F-type ATPases have 2 components, F(1) - the catalytic core - and F(0) - the membrane proton channel. F(1) has five subunits: alpha(3), beta(3), gamma(1), delta(1), epsilon(1). F(0) has three main subunits: a(1), b(2) and c(10-14). The alpha and beta chains form an alternating ring which encloses part of the gamma chain. F(1) is attached to F(0) by a central stalk formed by the gamma and epsilon chains, while a peripheral stalk is formed by the delta and b chains.

Its subcellular location is the cell inner membrane. Its function is as follows. F(1)F(0) ATP synthase produces ATP from ADP in the presence of a proton or sodium gradient. F-type ATPases consist of two structural domains, F(1) containing the extramembraneous catalytic core and F(0) containing the membrane proton channel, linked together by a central stalk and a peripheral stalk. During catalysis, ATP synthesis in the catalytic domain of F(1) is coupled via a rotary mechanism of the central stalk subunits to proton translocation. This protein is part of the stalk that links CF(0) to CF(1). It either transmits conformational changes from CF(0) to CF(1) or is implicated in proton conduction. In Cupriavidus taiwanensis (strain DSM 17343 / BCRC 17206 / CCUG 44338 / CIP 107171 / LMG 19424 / R1) (Ralstonia taiwanensis (strain LMG 19424)), this protein is ATP synthase subunit delta.